A 688-amino-acid chain; its full sequence is Potassium-transporting ATPase ATP-binding subunit (688 aa).

The next 4 membrane-spanning stretches (helical) occupy residues 35-55 (VMFV…AMLA), 62-82 (ALFT…ANFA), 219-239 (IALT…CVTL), and 260-280 (VLIA…LSAI). The active-site 4-aspartylphosphate intermediate is the aspartate 313. ATP is bound by residues aspartate 350, glutamate 354, 383 to 390 (FSAMTRMS), and lysine 401. 2 residues coordinate Mg(2+): aspartate 524 and aspartate 528. A run of 3 helical transmembrane segments spans residues 594 to 614 (FAII…LNIM), 622 to 642 (AVLS…PLAL), and 667 to 687 (GLIA…LLIL).

The protein belongs to the cation transport ATPase (P-type) (TC 3.A.3) family. Type IA subfamily. As to quaternary structure, the system is composed of three essential subunits: KdpA, KdpB and KdpC.

Its subcellular location is the cell inner membrane. It catalyses the reaction K(+)(out) + ATP + H2O = K(+)(in) + ADP + phosphate + H(+). Part of the high-affinity ATP-driven potassium transport (or Kdp) system, which catalyzes the hydrolysis of ATP coupled with the electrogenic transport of potassium into the cytoplasm. This subunit is responsible for energy coupling to the transport system and for the release of the potassium ions to the cytoplasm. This Photorhabdus laumondii subsp. laumondii (strain DSM 15139 / CIP 105565 / TT01) (Photorhabdus luminescens subsp. laumondii) protein is Potassium-transporting ATPase ATP-binding subunit.